Reading from the N-terminus, the 182-residue chain is Adenine phosphoribosyltransferase (182 aa).

Belongs to the purine/pyrimidine phosphoribosyltransferase family. In terms of assembly, homodimer.

The protein localises to the cytoplasm. The enzyme catalyses AMP + diphosphate = 5-phospho-alpha-D-ribose 1-diphosphate + adenine. It functions in the pathway purine metabolism; AMP biosynthesis via salvage pathway; AMP from adenine: step 1/1. In terms of biological role, catalyzes a salvage reaction resulting in the formation of AMP, that is energically less costly than de novo synthesis. This chain is Adenine phosphoribosyltransferase, found in Campylobacter curvus (strain 525.92).